An 801-amino-acid chain; its full sequence is LPS-assembly protein LptD (801 aa).

An N-terminal signal peptide occupies residues 1-23 (MARLFSLKPLVLALGFCFGTHCA).

Belongs to the LptD family. In terms of assembly, component of the lipopolysaccharide transport and assembly complex. Interacts with LptE and LptA.

The protein resides in the cell outer membrane. Together with LptE, is involved in the assembly of lipopolysaccharide (LPS) at the surface of the outer membrane. This chain is LPS-assembly protein LptD, found in Neisseria gonorrhoeae (strain ATCC 700825 / FA 1090).